We begin with the raw amino-acid sequence, 329 residues long: Protein STRICTOSIDINE SYNTHASE-LIKE 11 (329 aa).

Residues methionine 1–serine 23 form the signal peptide. N-linked (GlcNAc...) asparagine glycosylation is found at asparagine 37 and asparagine 79.

The protein belongs to the strictosidine synthase family.

It is found in the vacuole. The catalysed reaction is 3alpha(S)-strictosidine + H2O = secologanin + tryptamine. The protein operates within alkaloid biosynthesis; 3alpha(S)-strictosidine biosynthesis; 3alpha(S)-strictosidine from secologanin and tryptamine: step 1/1. In terms of biological role, catalyzes the stereospecific condensation of tryptamine with secologanin to form strictosidine, the key intermediate of indole alkaloid biosynthesis. This Arabidopsis thaliana (Mouse-ear cress) protein is Protein STRICTOSIDINE SYNTHASE-LIKE 11.